We begin with the raw amino-acid sequence, 573 residues long: Multidrug and toxin extrusion protein 2 (573 aa).

At 1-46 the chain is on the cytoplasmic side; sequence MEPAEDSLGATIQPPELVRVPRGRSLRILLGLRGALSPDVRREAAA. A helical transmembrane segment spans residues 47–67; that stretch reads LVALAGPVFLAQLMIFLISIV. At 68 to 81 the chain is on the extracellular side; the sequence is SSIFCGHLGKVELD. Residues 82–102 form a helical membrane-spanning segment; sequence AVTLAVSVVNVTGISVGTGLA. Over 103 to 122 the chain is Cytoplasmic; it reads SACDTLMSQSFGGKNLKRVG. The helical transmembrane segment at 123–143 threads the bilayer; that stretch reads VILQRGILILLLCCFPCWAIF. The Extracellular portion of the chain corresponds to 144 to 161; that stretch reads LNTERLLLLLRQDPDVAR. The helical transmembrane segment at 162 to 182 threads the bilayer; that stretch reads LAQVYVMICIPALPAAFLFQL. The Cytoplasmic segment spans residues 183-196; sequence QTRYLQSQGIIMPQ. The chain crosses the membrane as a helical span at residues 197 to 217; it reads VIVGIAANVVNVGMNAFLLYA. The Extracellular portion of the chain corresponds to 218–225; sequence LDLGVVGS. A helical transmembrane segment spans residues 226–246; the sequence is AWANTTSQFFLSALLFLYVWW. The Cytoplasmic segment spans residues 247-266; that stretch reads KRIHIHTWGGWTRECFQEWS. Residues 267 to 286 traverse the membrane as a helical segment; that stretch reads SYTRLAIPSMFMVCIEWWTF. At 287–304 the chain is on the extracellular side; sequence EIGTFLAGLVNVTELGAQ. The chain crosses the membrane as a helical span at residues 305–325; that stretch reads AVIYELASVAYMVPFGFGVAA. Residues 326 to 345 are Cytoplasmic-facing; sequence SVRVGNALGAGNADQARCSC. A helical membrane pass occupies residues 346-366; it reads TTVLLCAGVCALLVGILLAAL. The Extracellular segment spans residues 367–379; that stretch reads KDVVAYIFTNDKD. A helical membrane pass occupies residues 380–400; sequence IISLVSQVMPIFAPFHLFDAL. Topologically, residues 401–415 are cytoplasmic; the sequence is AGTCGGVLRGTGKQK. The helical transmembrane segment at 416–436 threads the bilayer; it reads IGAVLNTIGYYGFGFPIGVSL. Residues 437–443 lie on the Extracellular side of the membrane; the sequence is MFAAKLG. Residues 444-464 traverse the membrane as a helical segment; that stretch reads IIGLWAGLIVCVSFQAFSYLI. Residues 465 to 545 are Cytoplasmic-facing; sequence YILRTNWSRV…VGEVLTGRQL (81 aa). Residues 546 to 566 form a helical membrane-spanning segment; that stretch reads VFYRGMALTVSVAVLIAGIVV. Topologically, residues 567–573 are extracellular; it reads RVFNDRG.

Belongs to the multi antimicrobial extrusion (MATE) (TC 2.A.66.1) family. As to expression, expressed in testis; especially in testicular Leydig cells.

It is found in the cell membrane. Functionally, multidrug efflux pump that functions as a H(+)/organic cation antiporter. May mediate testosterone efflux from the Leydig cells in the testes. This Mus musculus (Mouse) protein is Multidrug and toxin extrusion protein 2 (Slc47a2).